A 101-amino-acid polypeptide reads, in one-letter code: Large ribosomal subunit protein uL24 (101 aa).

It belongs to the universal ribosomal protein uL24 family. In terms of assembly, part of the 50S ribosomal subunit.

Functionally, one of two assembly initiator proteins, it binds directly to the 5'-end of the 23S rRNA, where it nucleates assembly of the 50S subunit. One of the proteins that surrounds the polypeptide exit tunnel on the outside of the subunit. In Streptococcus mutans serotype c (strain ATCC 700610 / UA159), this protein is Large ribosomal subunit protein uL24.